Consider the following 343-residue polypeptide: Probable dual-specificity RNA methyltransferase RlmN (343 aa).

E91 acts as the Proton acceptor in catalysis. Positions 97–326 (HPDRITACIS…AEIRREKGTD (230 aa)) constitute a Radical SAM core domain. A disulfide bridge connects residues C104 and C331. Positions 111, 115, and 118 each coordinate [4Fe-4S] cluster. S-adenosyl-L-methionine-binding positions include 158–159 (GE), S190, 213–215 (SLH), and N289. C331 acts as the S-methylcysteine intermediate in catalysis.

The protein belongs to the radical SAM superfamily. RlmN family. It depends on [4Fe-4S] cluster as a cofactor.

The protein resides in the cytoplasm. It catalyses the reaction adenosine(2503) in 23S rRNA + 2 reduced [2Fe-2S]-[ferredoxin] + 2 S-adenosyl-L-methionine = 2-methyladenosine(2503) in 23S rRNA + 5'-deoxyadenosine + L-methionine + 2 oxidized [2Fe-2S]-[ferredoxin] + S-adenosyl-L-homocysteine. It carries out the reaction adenosine(37) in tRNA + 2 reduced [2Fe-2S]-[ferredoxin] + 2 S-adenosyl-L-methionine = 2-methyladenosine(37) in tRNA + 5'-deoxyadenosine + L-methionine + 2 oxidized [2Fe-2S]-[ferredoxin] + S-adenosyl-L-homocysteine. In terms of biological role, specifically methylates position 2 of adenine 2503 in 23S rRNA and position 2 of adenine 37 in tRNAs. The protein is Probable dual-specificity RNA methyltransferase RlmN of Thermotoga maritima (strain ATCC 43589 / DSM 3109 / JCM 10099 / NBRC 100826 / MSB8).